The primary structure comprises 327 residues: Zinc transport protein ZntB (327 aa).

The Cytoplasmic portion of the chain corresponds to Met1 to Ser271. A helical transmembrane segment spans residues Leu272–Gly292. Residues Gly293–Ala300 lie on the Periplasmic side of the membrane. The chain crosses the membrane as a helical span at residues Phe301 to Leu321. At Lys322–Leu327 the chain is on the cytoplasmic side.

Belongs to the CorA metal ion transporter (MIT) (TC 1.A.35) family.

It localises to the cell inner membrane. The enzyme catalyses Zn(2+)(out) + H(+)(out) = Zn(2+)(in) + H(+)(in). Its function is as follows. Zinc transporter. Acts as a Zn(2+):proton symporter, which likely mediates zinc ion uptake. This chain is Zinc transport protein ZntB, found in Yersinia pseudotuberculosis serotype O:1b (strain IP 31758).